A 204-amino-acid polypeptide reads, in one-letter code: UPF0637 protein lin1053 (204 aa).

This sequence belongs to the UPF0637 family.

The protein is UPF0637 protein lin1053 of Listeria innocua serovar 6a (strain ATCC BAA-680 / CLIP 11262).